Here is a 269-residue protein sequence, read N- to C-terminus: [LysW]-aminoadipate kinase (269 aa).

Residue 5-8 (KVGG) coordinates ATP. A substrate-binding site is contributed by R64. Y78 is an ATP binding site. A substrate-binding site is contributed by N168.

Belongs to the acetylglutamate kinase family. LysZ subfamily.

The protein localises to the cytoplasm. It catalyses the reaction [amino-group carrier protein]-C-terminal-N-(1,4-dicarboxybutan-1-yl)-L-glutamine + ATP = [amino-group carrier protein]-C-terminal-N-(1-carboxy-5-phosphooxy-5-oxopentan-1-yl)-L-glutamine + ADP. It participates in amino-acid biosynthesis; L-lysine biosynthesis via AAA pathway; L-lysine from L-alpha-aminoadipate (Thermus route): step 2/5. In terms of biological role, catalyzes the phosphorylation of LysW-gamma-alpha-aminoadipate. Does not phosphorylate N-acetyl-glutamate. The sequence is that of [LysW]-aminoadipate kinase from Thermus thermophilus (strain ATCC BAA-163 / DSM 7039 / HB27).